The primary structure comprises 144 residues: Ribosomally synthesized cyclic peptide phomopsin precursor phomA' (144 aa).

An N-terminal signal peptide occupies residues methionine 1–alanine 18. Propeptides lie at residues alanine 19 to aspartate 35, lysine 42 to aspartate 50, lysine 57 to aspartate 65, lysine 72 to aspartate 79, lysine 86 to aspartate 94, lysine 101 to aspartate 108, lysine 115 to aspartate 123, lysine 130 to aspartate 137, and lysine 144.

Post-translationally, phomA' is processed by several endopeptidases including kexin proteases as well as the cluster-specific S41 family peptidase phomP1' and the peptidase phomG' to produce 5 identical copies of the hexapeptide Tyr-Val-Ile-Pro-Ile-Asp and 3 identical copies of Tyr-Val-Ile-Pro-Phe-Asp, that are further modified into phomapsins A and P, respectively. The timing and order of proteolysis of the phomA' precursor and PTMs are still unknown. Two tyrosinase-like enzyme phomQ1' and PhomQ2, catalyze the chlorination and hydroxylation of Tyr, respectively. PhomYb', is proposed to be involved in the construction of the macrocyclic structure. The other four ustYa family proteins may be involved in PTMs that generate the unique structure of phomopsin A. PhomYa' is required for the hydroxylation of C-beta of Tyr. PhomYc', PhomYd', and PhomYe' are responsible for the biosynthesis of 2,3-dehydroisoleucine (dIle), 2,3-dehydroaspartic acid (dAsp), and 3,4-dehydroproline (dPro), respectively. While dIle formation by phomYc is indispensable for the installation of dAsp by phomYd, the order of the other PTMs have not been elucidated yet. Most of the biosynthetic enzymes likely have broad substrate specificity, and thus, there might be a metabolic grid from a precursor to phomopsin A. The enzyme(s) responsible for the biosynthesis of 3,4-dehydrovaline (dVal) have also not been identified yet. Finally, PhomM' acts as an S-adenosylmethionine-dependent alpha-N-methyltransferase that catalyzes two successive N-methylation reactions, converting N-desmethyl-phomopsin A to phomopsin A and phomopsin A further to an N,N-dimethylated congener called phomopsin E.

The protein operates within mycotoxin biosynthesis. Functionally, ribosomally synthesized cyclic peptide phomopsin precursor; part of the gene cluster that mediates the biosynthesis of the phomopsins, a group of hexapeptide mycotoxins which infects lupins and causes lupinosis disease in livestock. The phomA' translated product contains a 5-fold repeated peptide embedding the hexapeptide Tyr-Val-Ile-Pro-Ile-Asp and a 3-fold repeated peptide embedding the hexapeptide Tyr-Val-Ile-Pro-Phe-Asp, that is converted into phomapsin A and phomapsin P, respectively. After being excised from the precursor peptide by kexin proteases, the core peptides are cyclized and modified post-translationally by enzymes encoded within the corresponding gene cluster. The chain is Ribosomally synthesized cyclic peptide phomopsin precursor phomA' from Diaporthe leptostromiformis (Lupinosis disease fungus).